A 141-amino-acid polypeptide reads, in one-letter code: Hemoglobin subunit alpha (141 aa).

Residues 1–141 (VLSAADKTNV…VATVLTSKYR (141 aa)) enclose the Globin domain. Position 3 is a phosphoserine (Ser3). Lys7 is subject to N6-succinyllysine. Thr8 bears the Phosphothreonine mark. Lys11 carries the post-translational modification N6-succinyllysine. Lys16 is modified (N6-acetyllysine; alternate). Residue Lys16 is modified to N6-succinyllysine; alternate. Tyr24 is modified (phosphotyrosine). The residue at position 35 (Ser35) is a Phosphoserine. Lys40 is subject to N6-succinyllysine. Ser49 carries the post-translational modification Phosphoserine. His58 contacts O2. A heme b-binding site is contributed by His87. Residue Ser102 is modified to Phosphoserine. At Thr108 the chain carries Phosphothreonine. Ser124 is modified (phosphoserine). A phosphothreonine mark is found at Thr134 and Thr137. The residue at position 138 (Ser138) is a Phosphoserine.

The protein belongs to the globin family. As to quaternary structure, heterotetramer of two alpha chains and two beta chains. As to expression, red blood cells.

Functionally, involved in oxygen transport from the lung to the various peripheral tissues. Hemopressin acts as an antagonist peptide of the cannabinoid receptor CNR1. Hemopressin-binding efficiently blocks cannabinoid receptor CNR1 and subsequent signaling. This chain is Hemoglobin subunit alpha (HBA), found in Ctenodactylus gundi (Northern gundi).